We begin with the raw amino-acid sequence, 450 residues long: Chromosomal replication initiator protein DnaA (450 aa).

Residues 1-73 (MNTKELWIEV…KNILKKLTGI (73 aa)) are domain I, interacts with DnaA modulators. Positions 73–104 (IQYNISFELEKNINKQASVISKIDTLTENNNL) are domain II. The interval 105–326 (AYYENYTFEN…GAIKRLLFLA (222 aa)) is domain III, AAA+ region. Gly149, Gly151, Lys152, and Thr153 together coordinate ATP. A domain IV, binds dsDNA region spans residues 327–450 (VMNKKPNEII…NAIRRKIEGR (124 aa)).

It belongs to the DnaA family. Oligomerizes as a right-handed, spiral filament on DNA at oriC.

Its subcellular location is the cytoplasm. In terms of biological role, plays an essential role in the initiation and regulation of chromosomal replication. ATP-DnaA binds to the origin of replication (oriC) to initiate formation of the DNA replication initiation complex once per cell cycle. Binds the DnaA box (a 9 base pair repeat at the origin) and separates the double-stranded (ds)DNA. Forms a right-handed helical filament on oriC DNA; dsDNA binds to the exterior of the filament while single-stranded (ss)DNA is stabiized in the filament's interior. The ATP-DnaA-oriC complex binds and stabilizes one strand of the AT-rich DNA unwinding element (DUE), permitting loading of DNA polymerase. After initiation quickly degrades to an ADP-DnaA complex that is not apt for DNA replication. Binds acidic phospholipids. This is Chromosomal replication initiator protein DnaA from Spiroplasma citri.